We begin with the raw amino-acid sequence, 880 residues long: Alanine--tRNA ligase (880 aa).

4 residues coordinate Zn(2+): His568, His572, Cys670, and His674.

This sequence belongs to the class-II aminoacyl-tRNA synthetase family. The cofactor is Zn(2+).

The protein resides in the cytoplasm. It carries out the reaction tRNA(Ala) + L-alanine + ATP = L-alanyl-tRNA(Ala) + AMP + diphosphate. In terms of biological role, catalyzes the attachment of alanine to tRNA(Ala) in a two-step reaction: alanine is first activated by ATP to form Ala-AMP and then transferred to the acceptor end of tRNA(Ala). Also edits incorrectly charged Ser-tRNA(Ala) and Gly-tRNA(Ala) via its editing domain. This Exiguobacterium sibiricum (strain DSM 17290 / CCUG 55495 / CIP 109462 / JCM 13490 / 255-15) protein is Alanine--tRNA ligase.